Here is a 675-residue protein sequence, read N- to C-terminus: UvrABC system protein B (675 aa).

The region spanning 32–417 (EGLSDGLAYQ…EHAGQVVEQV (386 aa)) is the Helicase ATP-binding domain. An ATP-binding site is contributed by 45-52 (GVTGSGKT). Residues 98–121 (YYDYYQPEAYVPSRDLFIEKDSAI) carry the Beta-hairpin motif. In terms of domain architecture, Helicase C-terminal spans 436–602 (QVDDLMSEIN…QIKKQVKDII (167 aa)). Residues 634-669 (IKEIAKLEKAMQQAARDLQFEEAAVLRDRIRNIKEN) enclose the UVR domain.

The protein belongs to the UvrB family. As to quaternary structure, forms a heterotetramer with UvrA during the search for lesions. Interacts with UvrC in an incision complex.

The protein localises to the cytoplasm. In terms of biological role, the UvrABC repair system catalyzes the recognition and processing of DNA lesions. A damage recognition complex composed of 2 UvrA and 2 UvrB subunits scans DNA for abnormalities. Upon binding of the UvrA(2)B(2) complex to a putative damaged site, the DNA wraps around one UvrB monomer. DNA wrap is dependent on ATP binding by UvrB and probably causes local melting of the DNA helix, facilitating insertion of UvrB beta-hairpin between the DNA strands. Then UvrB probes one DNA strand for the presence of a lesion. If a lesion is found the UvrA subunits dissociate and the UvrB-DNA preincision complex is formed. This complex is subsequently bound by UvrC and the second UvrB is released. If no lesion is found, the DNA wraps around the other UvrB subunit that will check the other stand for damage. This chain is UvrABC system protein B, found in Neisseria meningitidis serogroup A / serotype 4A (strain DSM 15465 / Z2491).